Reading from the N-terminus, the 71-residue chain is Small ribosomal subunit protein bS18c (71 aa).

The protein belongs to the bacterial ribosomal protein bS18 family. Part of the 30S ribosomal subunit.

Its subcellular location is the plastid. It is found in the chloroplast. This is Small ribosomal subunit protein bS18c (rps18) from Mesostigma viride (Green alga).